Reading from the N-terminus, the 315-residue chain is Initiation factor TFIIB homolog (315 aa).

Belongs to the asfivirus C315R family.

Functionally, putative initation factor. The polypeptide is Initiation factor TFIIB homolog (Ornithodoros (relapsing fever ticks)).